Here is a 303-residue protein sequence, read N- to C-terminus: Sulfate adenylyltransferase subunit 2 (303 aa).

The interval 282-303 is disordered; it reads SGRLIDHDESGSMEKKKREGYF.

It belongs to the PAPS reductase family. CysD subfamily. In terms of assembly, heterodimer composed of CysD, the smaller subunit, and CysN.

The catalysed reaction is sulfate + ATP + H(+) = adenosine 5'-phosphosulfate + diphosphate. Its pathway is sulfur metabolism; hydrogen sulfide biosynthesis; sulfite from sulfate: step 1/3. Functionally, with CysN forms the ATP sulfurylase (ATPS) that catalyzes the adenylation of sulfate producing adenosine 5'-phosphosulfate (APS) and diphosphate, the first enzymatic step in sulfur assimilation pathway. APS synthesis involves the formation of a high-energy phosphoric-sulfuric acid anhydride bond driven by GTP hydrolysis by CysN coupled to ATP hydrolysis by CysD. This Maricaulis maris (strain MCS10) (Caulobacter maris) protein is Sulfate adenylyltransferase subunit 2.